The sequence spans 415 residues: Probable beta-1,4-xylosyltransferase IRX10L (415 aa).

A topological domain (cytoplasmic) is located at residue M1. The helical; Signal-anchor for type II membrane protein transmembrane segment at 2–22 threads the bilayer; sequence KLSSCVLIFLLCNTFSSISAF. Topologically, residues 23 to 415 are lumenal; the sequence is RLSRSQPTER…AGPVADLKPW (393 aa). N142 and N403 each carry an N-linked (GlcNAc...) asparagine glycan.

The protein belongs to the glycosyltransferase 47 family. As to expression, present in the xylem and phloem, and, to a lower extent, in interfascicular cells. Expressed in the root tip, shoot apical meristem (SAM), xylem cells of roots and stems, and in the vasculature of roots, cotyledons and leaves.

The protein localises to the golgi apparatus membrane. In terms of biological role, involved in the synthesis of the hemicellulose glucuronoxylan, a major component of secondary cell walls. Probably involved in the elongation of glucuronoxylan xylosyl backbone. This chain is Probable beta-1,4-xylosyltransferase IRX10L (IRX10L), found in Arabidopsis thaliana (Mouse-ear cress).